A 116-amino-acid chain; its full sequence is T cell receptor alpha variable 14/delta variable 4 (116 aa).

The signal sequence occupies residues 1 to 21 (MSLSSLLKVVTASLWLGPGIA). An Ig-like domain is found at 22–116 (QKITQTQPGM…SAMYFCAMRE (95 aa)). Cysteines 43 and 112 form a disulfide. N-linked (GlcNAc...) asparagine glycosylation is present at Asn-78.

Alpha-beta TR is a heterodimer composed of an alpha and beta chain; disulfide-linked. The alpha-beta TR is associated with the transmembrane signaling CD3 coreceptor proteins to form the TR-CD3 (TcR or TCR). The assembly of alpha-beta TR heterodimers with CD3 occurs in the endoplasmic reticulum where a single alpha-beta TR heterodimer associates with one CD3D-CD3E heterodimer, one CD3G-CD3E heterodimer and one CD247 homodimer forming a stable octameric structure. CD3D-CD3E and CD3G-CD3E heterodimers preferentially associate with TR alpha and TR beta chains, respectively. The association of the CD247 homodimer is the last step of TcR assembly in the endoplasmic reticulum and is required for transport to the cell surface.

The protein localises to the cell membrane. In terms of biological role, v region of the variable domain of T cell receptor (TR) alpha chain that participates in the antigen recognition. Alpha-beta T cell receptors are antigen specific receptors which are essential to the immune response and are present on the cell surface of T lymphocytes. Recognize peptide-major histocompatibility (MH) (pMH) complexes that are displayed by antigen presenting cells (APC), a prerequisite for efficient T cell adaptive immunity against pathogens. Binding of alpha-beta TR to pMH complex initiates TR-CD3 clustering on the cell surface and intracellular activation of LCK that phosphorylates the ITAM motifs of CD3G, CD3D, CD3E and CD247 enabling the recruitment of ZAP70. In turn ZAP70 phosphorylates LAT, which recruits numerous signaling molecules to form the LAT signalosome. The LAT signalosome propagates signal branching to three major signaling pathways, the calcium, the mitogen-activated protein kinase (MAPK) kinase and the nuclear factor NF-kappa-B (NF-kB) pathways, leading to the mobilization of transcription factors that are critical for gene expression and essential for T cell growth and differentiation. The T cell repertoire is generated in the thymus, by V-(D)-J rearrangement. This repertoire is then shaped by intrathymic selection events to generate a peripheral T cell pool of self-MH restricted, non-autoaggressive T cells. Post-thymic interaction of alpha-beta TR with the pMH complexes shapes TR structural and functional avidity. The polypeptide is T cell receptor alpha variable 14/delta variable 4 (Homo sapiens (Human)).